Reading from the N-terminus, the 772-residue chain is MGCNMCVVQKPEEQYKVMLQVNGKELSKLSQEQTLEALRASKEPLVIQVLRRSPRLRGDSSCHDLQLVDSGTQTDITFEHIMALGKLRPPTPPMGILEPYVLSELPPISHEYYDPAEFMEGGPQEAERMDELEYEEVELCKNSHQDKLGLMVCYRTDEEEDLGIYVGEVNPNSIAAKDGRIREGDRIIQINGMDVQNREEAVAILSQEENTNISLLVARPESQLAKRWKDSDRDDFLDDFGSENEGDLRARKLKSPPVQQIGNDEKGAPDGGPGLNNSQDLDSGVGRTDESTRNEESSEHDLLGDEPPSTTNTPGSLRKFGLQGDALQSRDFHFSMDSLLAEGAGLGGADLPGLTDEEYERYRELLEIKCHLENGNQLGIFFSRASSGNSALDVNRNESLGHEMAMLEEELRHLEFKCRNILRAQKMQQLRERCMKAWLLEEESLYDLAASEPKKHELSDISELPEKSDKDSTSAYNTGESCRSTPLLVEPLPESPLKRSGAGNSNLNRTPSGPPVTTHLKGAPSPGSPAKFRSLSRDPEVGRRQHTEERVRRSTKTSVTLERVGPEGSPYLSRRHRGQEIEQYHSCVQLAPPRTLEDLGHGSLSLASGPRVGGVAAAAVEAPRMEWKVKVRSDGTRYVAKRPVRDRLLKARALKIREERSGMTTDDDAVSEMKMGRYWSKEERKQHLIRAREQRKRREFMMQSRLECLREQQNGDSKPELNIIALSHRKTMKKRNKKILDNWITIQEMLAHGARSADGKRIYNPLLSVTTV.

Residues 136-221 (EVELCKNSHQ…NISLLVARPE (86 aa)) enclose the PDZ domain. A disordered region spans residues 239–320 (DFGSENEGDL…TNTPGSLRKF (82 aa)). At S242 the chain carries Phosphoserine. Residues 287–303 (RTDESTRNEESSEHDLL) show a composition bias toward basic and acidic residues. Positions 394–424 (VNRNESLGHEMAMLEEELRHLEFKCRNILRA) form a coiled coil. The tract at residues 450–573 (ASEPKKHELS…VGPEGSPYLS (124 aa)) is disordered. Residues 452–472 (EPKKHELSDISELPEKSDKDS) show a composition bias toward basic and acidic residues. A Phosphoserine modification is found at S459. Composition is skewed to polar residues over residues 473 to 484 (TSAYNTGESCRS) and 502 to 511 (AGNSNLNRTP). A compositionally biased stretch (basic and acidic residues) spans 535-552 (LSRDPEVGRRQHTEERVR).

Its subcellular location is the cytoplasm. It localises to the cell cortex. The polypeptide is PDZ domain-containing protein 4 (Pdzd4) (Mus musculus (Mouse)).